A 372-amino-acid chain; its full sequence is 4-hydroxy-3-methylbut-2-en-1-yl diphosphate synthase (flavodoxin) (372 aa).

The [4Fe-4S] cluster site is built by Cys270, Cys273, Cys305, and Glu312.

Belongs to the IspG family. Requires [4Fe-4S] cluster as cofactor.

The catalysed reaction is (2E)-4-hydroxy-3-methylbut-2-enyl diphosphate + oxidized [flavodoxin] + H2O + 2 H(+) = 2-C-methyl-D-erythritol 2,4-cyclic diphosphate + reduced [flavodoxin]. It functions in the pathway isoprenoid biosynthesis; isopentenyl diphosphate biosynthesis via DXP pathway; isopentenyl diphosphate from 1-deoxy-D-xylulose 5-phosphate: step 5/6. Functionally, converts 2C-methyl-D-erythritol 2,4-cyclodiphosphate (ME-2,4cPP) into 1-hydroxy-2-methyl-2-(E)-butenyl 4-diphosphate. This chain is 4-hydroxy-3-methylbut-2-en-1-yl diphosphate synthase (flavodoxin), found in Aliivibrio fischeri (strain ATCC 700601 / ES114) (Vibrio fischeri).